A 368-amino-acid polypeptide reads, in one-letter code: Transaldolase (368 aa).

The active-site Schiff-base intermediate with substrate is the K140.

This sequence belongs to the transaldolase family. Type 2 subfamily.

The protein localises to the cytoplasm. It carries out the reaction D-sedoheptulose 7-phosphate + D-glyceraldehyde 3-phosphate = D-erythrose 4-phosphate + beta-D-fructose 6-phosphate. Its pathway is carbohydrate degradation; pentose phosphate pathway; D-glyceraldehyde 3-phosphate and beta-D-fructose 6-phosphate from D-ribose 5-phosphate and D-xylulose 5-phosphate (non-oxidative stage): step 2/3. In terms of biological role, transaldolase is important for the balance of metabolites in the pentose-phosphate pathway. The polypeptide is Transaldolase (Kocuria rhizophila (strain ATCC 9341 / DSM 348 / NBRC 103217 / DC2201)).